The sequence spans 271 residues: ABC transporter I family member 10 (271 aa).

The ABC transporter domain maps to 40-267 (VECRNLCFSV…IKAKQSSYID (228 aa)). An ATP-binding site is contributed by 77-84 (GPNGCGKS).

This sequence belongs to the ABC transporter superfamily. ABCI family.

The chain is ABC transporter I family member 10 (ABCI10) from Arabidopsis thaliana (Mouse-ear cress).